Consider the following 83-residue polypeptide: Kunitz-type serine protease inhibitor textilinin-1 (83 aa).

Positions 1-24 (MSSGGLLLLLGLLTLWEVLTPVSS) are cleaved as a signal peptide. A BPTI/Kunitz inhibitor domain is found at 31–81 (CELPADTGPCRVRFPSFYYNPDEKKCLEFIYGGCEGNANNFITKEECESTC). Intrachain disulfides connect C31-C81, C40-C64, and C56-C77.

This sequence belongs to the venom Kunitz-type family. As to expression, expressed by the venom gland.

It localises to the secreted. In terms of biological role, strongly inhibits plasmin (Ki=0.44 nM) and trypsin (Ki=0.42 nM). Has little effect on plasma (Ki=1870 nM) and tissue (Ki=12900 nM) kallikreins. Its plasmin-inhibiting activity makes it an antifibrinolytic agent. In vivo, reduces blood loss in a mouse tail vein bleeding model. The sequence is that of Kunitz-type serine protease inhibitor textilinin-1 from Pseudonaja textilis textilis (Eastern brown snake).